Consider the following 282-residue polypeptide: MSDNKIYLCAISNIESGTCNEDCKFCTQSVKYKADIERYRRKEIEDIVNEAKKARANKAVGFCLVTAGTGLDDKRLDYVCRAADAVHKAVPDISLIACNGIASYEQLKELKKHGIENYNHNLETAREFYNEICTTHSWDDRYETCLNAKKAGLYLCTGGIFGLGETQENRISMLKSIASLEPMSVPINFFHPNDALPLVKNPLTKQEAFDLVKLARSYLPNQMLMIAGGRELMFGEEQYDVFKHGANALVVGDYLTTGGRDAQDDIDAVTALGYEIAFACHQ.

In terms of domain architecture, Radical SAM core spans 1-230; sequence MSDNKIYLCA…NQMLMIAGGR (230 aa). Residues cysteine 19, cysteine 23, and cysteine 26 each coordinate [4Fe-4S] cluster. Cysteine 63, cysteine 98, and cysteine 156 together coordinate [2Fe-2S] cluster.

The protein belongs to the radical SAM superfamily. Biotin synthase family. Homodimer. The cofactor is [4Fe-4S] cluster. [2Fe-2S] cluster serves as cofactor.

It catalyses the reaction (4R,5S)-dethiobiotin + (sulfur carrier)-SH + 2 reduced [2Fe-2S]-[ferredoxin] + 2 S-adenosyl-L-methionine = (sulfur carrier)-H + biotin + 2 5'-deoxyadenosine + 2 L-methionine + 2 oxidized [2Fe-2S]-[ferredoxin]. It functions in the pathway cofactor biosynthesis; biotin biosynthesis; biotin from 7,8-diaminononanoate: step 2/2. In terms of biological role, catalyzes the conversion of dethiobiotin (DTB) to biotin by the insertion of a sulfur atom into dethiobiotin via a radical-based mechanism. The polypeptide is Biotin synthase (Aliarcobacter butzleri (strain RM4018) (Arcobacter butzleri)).